We begin with the raw amino-acid sequence, 208 residues long: FAS-associated death domain protein (208 aa).

The region spanning 3–81 is the DED domain; that stretch reads PFLVLLHSVS…RHDLLRRVDD (79 aa). In terms of domain architecture, Death spans 97-181; the sequence is LCAAFNVICD…LVADLVQEVQ (85 aa). R117 carries a (Microbial infection) N-beta-linked (GlcNAc) arginine glycan. The segment at 187-208 is disordered; that stretch reads QNRSGAMSPMSWNSDASTSEAS. S194 is modified (phosphoserine).

In terms of assembly, can self-associate. Component of the AIM2 PANoptosome complex, a multiprotein complex that drives inflammatory cell death (PANoptosis). Component of the death-induced signaling complex (DISC) composed of cell surface receptor FAS/CD95 or TNFRSF1A, adapter protein FADD and the CASP8 protease; recruitment of CASP8 to the complex is required for processing of CASP8 into the p18 and p10 subunits. Interacts (via death domain) with FAS (via death domain). Interacts directly (via DED domain) with NOL3 (via CARD domain); inhibits death-inducing signaling complex (DISC) assembly by inhibiting the increase in FAS-FADD binding induced by FAS activation. Interacts with CFLAR, PEA15 and MBD4. When phosphorylated, part of a complex containing HIPK3 and FAS. May interact with MAVS/IPS1. Interacts with MOCV v-CFLAR protein and PIDD1. Interacts with RIPK1 and TRADD. Interacts with stimulated TNFRSF10B. Interacts with DDX24. (Microbial infection) Interacts with human papillomavirus 16/HPV16 protein E6. As to quaternary structure, (Microbial infection) Interacts with molluscum contagiosum virus proteins MC159L/v-CFLAR and MC160L. (Microbial infection) Glycosylated at Arg-117 by enteropathogenic E.coli protein NleB1, C.rodentium protein NleB and S.typhimurium protein Ssek1: arginine GlcNAcylation prevents recruitment of caspase-8 or caspase-10 to the activated Fas (CD95) or TNFR-1 receptors. In terms of tissue distribution, expressed in a wide variety of tissues, except for peripheral blood mononuclear leukocytes.

Its subcellular location is the cytoplasm. Apoptotic adapter molecule that recruits caspases CASP8 or CASP10 to the activated FAS/CD95 or TNFRSF1A/TNFR-1 receptors. The resulting aggregate called the death-inducing signaling complex (DISC) performs CASP8 proteolytic activation. Active CASP8 initiates the subsequent cascade of caspases mediating apoptosis. Involved in interferon-mediated antiviral immune response, playing a role in the positive regulation of interferon signaling. This chain is FAS-associated death domain protein, found in Homo sapiens (Human).